Consider the following 409-residue polypeptide: Translation initiation factor 2 subunit gamma (409 aa).

Residues 6–203 (QPEVNIGLVG…AVQSEIPTPE (198 aa)) enclose the tr-type G domain. The tract at residues 15-22 (GHVDHGKT) is G1. Mg(2+)-binding residues include D18, T22, G43, and S45. 18 to 23 (DHGKTT) is a GTP binding site. A G2 region spans residues 43 to 47 (GISIR). The tract at residues 90–93 (DAPG) is G3. GTP contacts are provided by residues 146-149 (NKVD) and 181-183 (SAG). Residues 146 to 149 (NKVD) are G4. The tract at residues 181–183 (SAG) is G5.

This sequence belongs to the TRAFAC class translation factor GTPase superfamily. Classic translation factor GTPase family. EIF2G subfamily. Heterotrimer composed of an alpha, a beta and a gamma chain. Requires Mg(2+) as cofactor.

It carries out the reaction GTP + H2O = GDP + phosphate + H(+). EIF-2 functions in the early steps of protein synthesis by forming a ternary complex with GTP and initiator tRNA. The sequence is that of Translation initiation factor 2 subunit gamma from Haloarcula marismortui (strain ATCC 43049 / DSM 3752 / JCM 8966 / VKM B-1809) (Halobacterium marismortui).